A 227-amino-acid chain; its full sequence is ATP-dependent dethiobiotin synthetase BioD (227 aa).

13–18 (DIGKTY) is an ATP binding site. Thr17 provides a ligand contact to Mg(2+). The active site involves Lys38. Ser42 lines the substrate pocket. ATP-binding positions include Asp55, 116 to 119 (EGSG), and 179 to 180 (NN). Residues Asp55 and Glu116 each coordinate Mg(2+).

The protein belongs to the dethiobiotin synthetase family. In terms of assembly, homodimer. The cofactor is Mg(2+).

It is found in the cytoplasm. The catalysed reaction is (7R,8S)-7,8-diammoniononanoate + CO2 + ATP = (4R,5S)-dethiobiotin + ADP + phosphate + 3 H(+). It functions in the pathway cofactor biosynthesis; biotin biosynthesis; biotin from 7,8-diaminononanoate: step 1/2. In terms of biological role, catalyzes a mechanistically unusual reaction, the ATP-dependent insertion of CO2 between the N7 and N8 nitrogen atoms of 7,8-diaminopelargonic acid (DAPA, also called 7,8-diammoniononanoate) to form a ureido ring. The chain is ATP-dependent dethiobiotin synthetase BioD from Clostridium botulinum (strain Kyoto / Type A2).